The following is a 565-amino-acid chain: Dihydroxy-acid dehydratase (565 aa).

Asp-80 serves as a coordination point for Mg(2+). Cys-121 serves as a coordination point for [2Fe-2S] cluster. The Mg(2+) site is built by Asp-122 and Lys-123. Lys-123 bears the N6-carboxylysine mark. [2Fe-2S] cluster is bound at residue Cys-194. Position 447 (Glu-447) interacts with Mg(2+). Residue Ser-473 is the Proton acceptor of the active site.

Belongs to the IlvD/Edd family. Homodimer. [2Fe-2S] cluster serves as cofactor. The cofactor is Mg(2+).

It carries out the reaction (2R)-2,3-dihydroxy-3-methylbutanoate = 3-methyl-2-oxobutanoate + H2O. It catalyses the reaction (2R,3R)-2,3-dihydroxy-3-methylpentanoate = (S)-3-methyl-2-oxopentanoate + H2O. It participates in amino-acid biosynthesis; L-isoleucine biosynthesis; L-isoleucine from 2-oxobutanoate: step 3/4. It functions in the pathway amino-acid biosynthesis; L-valine biosynthesis; L-valine from pyruvate: step 3/4. Its function is as follows. Functions in the biosynthesis of branched-chain amino acids. Catalyzes the dehydration of (2R,3R)-2,3-dihydroxy-3-methylpentanoate (2,3-dihydroxy-3-methylvalerate) into 2-oxo-3-methylpentanoate (2-oxo-3-methylvalerate) and of (2R)-2,3-dihydroxy-3-methylbutanoate (2,3-dihydroxyisovalerate) into 2-oxo-3-methylbutanoate (2-oxoisovalerate), the penultimate precursor to L-isoleucine and L-valine, respectively. This Pelodictyon phaeoclathratiforme (strain DSM 5477 / BU-1) protein is Dihydroxy-acid dehydratase.